Here is a 547-residue protein sequence, read N- to C-terminus: MGIKQHNGNTKADRLAELKIRSPSIQLIKFGAIGLNAILFSPLLIAADTGSQYGTNITINDGDRITGDTADPSGNLYGVMTPAGNTPGNINLGNDVTVNVNDASGYAKGIIIQGKNSSLTANRLTVDVVGQTSAIGINLIGDYTHADLGTGSTIKSNDDGIIIGHSSTLTATQFTIENSNGIGLTINDYGTSVDLGSGSKIKTDGSTGVYIGGLNGNNANGAARFTATDLTIDVQGYSAMGINVQKNSVVDLGTNSSIKTSGDNAHGLWSFGQVSANALTVDVTGAAANGVEVRGGTTTIGADSHISSAQGGGLVTSGSDATINFSGTAAQRNSIFSGGSYGASAQTATAVINMQNTDITVDRNGSLALGLWALSGGRITGDSLAITGAAGARGIYAMTNSQIDLTSDLVIDMSTPDQMAIATQHDDGYAASRINASGRMLINGSVLSKGGLINLDMHPGSVWTGSSLSDNVNGGKLDVAMNNSVWNVTSNSNLDTLALSHSTVDFASHGSTAGTFTTLNVENLSGNSTFIMRADVVGEGNGVKPWA.

To B.pertussis prn N-terminal region.

This is an uncharacterized protein from Escherichia coli O157:H7.